The sequence spans 289 residues: Pantothenate synthetase (289 aa).

30-37 (MGNLHEGH) contributes to the ATP binding site. The Proton donor role is filled by His-37. Gln-61 contacts (R)-pantoate. Residue Gln-61 coordinates beta-alanine. Residue 149–152 (GEKD) participates in ATP binding. Gln-155 is a binding site for (R)-pantoate. 186 to 189 (MSSR) is an ATP binding site.

It belongs to the pantothenate synthetase family. Homodimer.

The protein resides in the cytoplasm. The enzyme catalyses (R)-pantoate + beta-alanine + ATP = (R)-pantothenate + AMP + diphosphate + H(+). It participates in cofactor biosynthesis; (R)-pantothenate biosynthesis; (R)-pantothenate from (R)-pantoate and beta-alanine: step 1/1. In terms of biological role, catalyzes the condensation of pantoate with beta-alanine in an ATP-dependent reaction via a pantoyl-adenylate intermediate. The sequence is that of Pantothenate synthetase from Psychromonas ingrahamii (strain DSM 17664 / CCUG 51855 / 37).